A 254-amino-acid chain; its full sequence is NAD-dependent protein deacylase 2 (254 aa).

Residues 1–254 (MDEHSIMQAV…LPALVRRLGV (254 aa)) form the Deacetylase sirtuin-type domain. 24–44 (GAGMSADSGLETYRDPETGVW) lines the NAD(+) pocket. 2 residues coordinate substrate: Tyr69 and Arg72. 105-108 (QNID) provides a ligand contact to NAD(+). The active-site Proton acceptor is His123. Zn(2+) contacts are provided by Cys131, Cys134, Cys157, and Cys160. Residues 197-199 (GTS) and Ala241 each bind NAD(+).

It belongs to the sirtuin family. Class III subfamily. It depends on Zn(2+) as a cofactor.

It localises to the cytoplasm. The enzyme catalyses N(6)-acetyl-L-lysyl-[protein] + NAD(+) + H2O = 2''-O-acetyl-ADP-D-ribose + nicotinamide + L-lysyl-[protein]. It carries out the reaction N(6)-succinyl-L-lysyl-[protein] + NAD(+) + H2O = 2''-O-succinyl-ADP-D-ribose + nicotinamide + L-lysyl-[protein]. NAD-dependent lysine deacetylase and desuccinylase that specifically removes acetyl and succinyl groups on target proteins. Modulates the activities of several proteins which are inactive in their acylated form. The sequence is that of NAD-dependent protein deacylase 2 from Corynebacterium efficiens (strain DSM 44549 / YS-314 / AJ 12310 / JCM 11189 / NBRC 100395).